A 202-amino-acid polypeptide reads, in one-letter code: Urease accessory protein UreG (202 aa).

11-18 (GPVGSGKT) is a binding site for GTP.

This sequence belongs to the SIMIBI class G3E GTPase family. UreG subfamily. In terms of assembly, homodimer. UreD, UreF and UreG form a complex that acts as a GTP-hydrolysis-dependent molecular chaperone, activating the urease apoprotein by helping to assemble the nickel containing metallocenter of UreC. The UreE protein probably delivers the nickel.

Its subcellular location is the cytoplasm. Functionally, facilitates the functional incorporation of the urease nickel metallocenter. This process requires GTP hydrolysis, probably effectuated by UreG. In Magnetococcus marinus (strain ATCC BAA-1437 / JCM 17883 / MC-1), this protein is Urease accessory protein UreG.